The following is a 34-amino-acid chain: U1-poneritoxin-Na2a (34 aa).

In terms of tissue distribution, expressed by the venom gland.

The protein resides in the secreted. In terms of biological role, may have antimicrobial properties, like most ant linear peptides. The protein is U1-poneritoxin-Na2a of Neoponera apicalis (Ant).